The primary structure comprises 252 residues: 2-C-methyl-D-erythritol 4-phosphate cytidylyltransferase (252 aa).

This sequence belongs to the IspD/TarI cytidylyltransferase family. IspD subfamily.

The catalysed reaction is 2-C-methyl-D-erythritol 4-phosphate + CTP + H(+) = 4-CDP-2-C-methyl-D-erythritol + diphosphate. It participates in isoprenoid biosynthesis; isopentenyl diphosphate biosynthesis via DXP pathway; isopentenyl diphosphate from 1-deoxy-D-xylulose 5-phosphate: step 2/6. Functionally, catalyzes the formation of 4-diphosphocytidyl-2-C-methyl-D-erythritol from CTP and 2-C-methyl-D-erythritol 4-phosphate (MEP). The sequence is that of 2-C-methyl-D-erythritol 4-phosphate cytidylyltransferase from Chlorobium phaeobacteroides (strain BS1).